A 455-amino-acid polypeptide reads, in one-letter code: ATP-dependent protease ATPase subunit HslU (455 aa).

Residues Val23, 65-70 (GVGKTE), Asp266, Glu333, and Arg405 contribute to the ATP site.

Belongs to the ClpX chaperone family. HslU subfamily. As to quaternary structure, a double ring-shaped homohexamer of HslV is capped on each side by a ring-shaped HslU homohexamer. The assembly of the HslU/HslV complex is dependent on binding of ATP.

It is found in the cytoplasm. In terms of biological role, ATPase subunit of a proteasome-like degradation complex; this subunit has chaperone activity. The binding of ATP and its subsequent hydrolysis by HslU are essential for unfolding of protein substrates subsequently hydrolyzed by HslV. HslU recognizes the N-terminal part of its protein substrates and unfolds these before they are guided to HslV for hydrolysis. This is ATP-dependent protease ATPase subunit HslU from Xanthomonas oryzae pv. oryzae (strain MAFF 311018).